The following is a 549-amino-acid chain: Ankyrin repeat domain-containing protein SOWAHA (549 aa).

Residues 1–17 (MALAAAAAAAAAGVSQA) form the signal peptide. Disordered stretches follow at residues 82–219 (KPRP…PCML) and 235–256 (EEPG…PLLL). The segment covering 203 to 216 (PGPGAAKGPPQQKP) has biased composition (low complexity). Positions 235-248 (EEPGLRRQLSEEPS) are enriched in basic and acidic residues. The residue at position 260 (Ser-260) is a Phosphoserine. ANK repeat units follow at residues 345–374 (SGFT…RSGA) and 384–414 (GGYT…QVHV). The tract at residues 513–549 (PRKKTKIRGGLPAFSEISRRPTPGPLAGLVPSLPPTT) is disordered.

Belongs to the SOWAH family.

In Homo sapiens (Human), this protein is Ankyrin repeat domain-containing protein SOWAHA (SOWAHA).